The following is a 379-amino-acid chain: L-demethylnoviosyl transferase (379 aa).

The protein belongs to the glycosyltransferase 28 family.

It carries out the reaction dTDP-4-O-demethyl-beta-L-noviose + novobiocic acid = desmethyldescarbamoylnovobiocin + dTDP + H(+). Its pathway is antibiotic biosynthesis; novobiocin biosynthesis. With respect to regulation, inhibited by TDP-L-rhamnose, the sugar donor that most closely structurally resembles the natural substrate dTDP-beta-L-noviose. In terms of biological role, catalyzes the transfer of L-noviose from dTDP-4-O-demethyl-beta-L-noviose to the phenolic oxygen of novobiocic acid, creating the full ABC ring system in the novobiocin biosynthesis pathway. Novobiocin is an aminocoumarin family antibiotic that targets bacterial DNA gyrases. Also shows activity with variant coumarin aglycones, suggesting it may be a promiscuous catalyst for noviosylation of a range of planar scaffolds. Does not show activity with TDP-L-rhamnose. The chain is L-demethylnoviosyl transferase (novM) from Streptomyces niveus (Streptomyces spheroides).